Reading from the N-terminus, the 410-residue chain is Translation initiation factor 2 subunit gamma (410 aa).

Residues 6–203 (QSEVNIGMVG…AIQEFIPTPK (198 aa)) enclose the tr-type G domain. The tract at residues 15-22 (GHVDHGKT) is G1. 4 residues coordinate Mg(2+): aspartate 18, threonine 22, glycine 43, and serine 45. Residue 18 to 23 (DHGKTS) participates in GTP binding. The tract at residues 43 to 47 (GISIR) is G2. Positions 58, 61, 73, and 76 each coordinate Zn(2+). The tract at residues 90–93 (DAPG) is G3. GTP is bound by residues 146–149 (NKID) and 181–183 (SAH). A G4 region spans residues 146–149 (NKID). The tract at residues 181 to 183 (SAH) is G5.

The protein belongs to the TRAFAC class translation factor GTPase superfamily. Classic translation factor GTPase family. EIF2G subfamily. Heterotrimer composed of an alpha, a beta and a gamma chain. Requires Mg(2+) as cofactor.

The catalysed reaction is GTP + H2O = GDP + phosphate + H(+). EIF-2 functions in the early steps of protein synthesis by forming a ternary complex with GTP and initiator tRNA. The sequence is that of Translation initiation factor 2 subunit gamma from Methanococcus maripaludis (strain C6 / ATCC BAA-1332).